Here is a 238-residue protein sequence, read N- to C-terminus: Phosphatidylcholine synthase (238 aa).

The Cytoplasmic portion of the chain corresponds to 1–16; that stretch reads MPVNLSMTPINKAKAW. A helical transmembrane segment spans residues 17-37; that stretch reads GVHAVTASGVILALLALLALV. Residues 38-41 are Periplasmic-facing; sequence DNKP. The helical transmembrane segment at 42-62 threads the bilayer; the sequence is QACLLWLGLALLVDGLDGTLA. Topologically, residues 63-75 are cytoplasmic; it reads RKYEVKEMLPHFD. A helical membrane pass occupies residues 76–96; sequence GSVLDLVIDYLTYVFIPAIFI. The Periplasmic segment spans residues 97–104; that stretch reads YRYIPLPE. The helical transmembrane segment at 105–125 threads the bilayer; the sequence is HFELLAVGVILVSSLFCFCNV. Over 126 to 132 the chain is Cytoplasmic; the sequence is NMKSTDN. Residues 133-153 traverse the membrane as a helical segment; the sequence is YFVGFPAAWNVVAVYFYVLDL. The Periplasmic segment spans residues 154–155; that stretch reads HP. A helical membrane pass occupies residues 156 to 176; the sequence is WVNLATVLVLAALTLTRMKFL. Over 177 to 183 the chain is Cytoplasmic; the sequence is HPFRVRQ. A helical transmembrane segment spans residues 184-204; it reads FMPLNIAVTFVWLISSGLLIV. The Periplasmic portion of the chain corresponds to 205–209; the sequence is QQPAD. A helical membrane pass occupies residues 210-230; the sequence is LPILLGLWFAASAYFVGICLW. Residues 231–238 lie on the Cytoplasmic side of the membrane; sequence RSAREWFG.

It belongs to the CDP-alcohol phosphatidyltransferase class-I family. Requires Mn(2+) as cofactor.

It is found in the cell inner membrane. It carries out the reaction a CDP-1,2-diacyl-sn-glycerol + choline = a 1,2-diacyl-sn-glycero-3-phosphocholine + CMP + H(+). Functionally, condenses choline with CDP-diglyceride to produce phosphatidylcholine and CMP. This is Phosphatidylcholine synthase from Pseudomonas aeruginosa (strain ATCC 15692 / DSM 22644 / CIP 104116 / JCM 14847 / LMG 12228 / 1C / PRS 101 / PAO1).